Here is a 333-residue protein sequence, read N- to C-terminus: MLDYEWDNPSSIVLSGDERNPDSDPTRSSFSFFDPISHYNNDHRHITISPPLLSSFSNQQQQHHLTLYGQTNSNNQFLHHHHHHHSLYGSTTTTTPYGASDPIYHPHSSAPPASLFSYDQTGPGSGSGSSYNFLIPKTEVDFTSNRIGLNLGGRTYFSAADDDFVSRLYRRSRPGESGMANSLSTPRCQAEGCNADLSHAKHYHRRHKVCEFHSKASTVVAAGLSQRFCQQCSRFHLLSEFDNGKRSCRKRLADHNRRRRKCHQSASATQDTGTGKTTPKSPNDSGVKASSSPSSNAPPTISLECFRQRQFQTTASSSTSASSSSNSMFFSSG.

Positions 1-28 (MLDYEWDNPSSIVLSGDERNPDSDPTRS) are disordered. Residues 16-25 (GDERNPDSDP) show a composition bias toward basic and acidic residues. Residues 179–269 (MANSLSTPRC…RKCHQSASAT (91 aa)) are sufficient and necessary for DNA binding. The segment at 185 to 262 (TPRCQAEGCN…ADHNRRRRKC (78 aa)) adopts an SBP-type zinc-finger fold. Zn(2+) is bound by residues Cys188, Cys193, Cys210, His213, Cys229, Cys232, His236, and Cys248. The short motif at 245–261 (KRSCRKRLADHNRRRRK) is the Bipartite nuclear localization signal element. 2 disordered regions span residues 254–303 (DHNR…TISL) and 314–333 (TASSSTSASSSSNSMFFSSG). Over residues 264–284 (QSASATQDTGTGKTTPKSPND) the composition is skewed to polar residues. Over residues 289 to 299 (ASSSPSSNAPP) the composition is skewed to low complexity.

It depends on Zn(2+) as a cofactor. Expressed in shoot apical region and early floral tissues. Transcripts levels increase in developing pollen sacs, and decrease in later stage of anther development. Strongly expressed in the placental region of the carpels.

The protein localises to the nucleus. Its subcellular location is the cytoplasm. Its function is as follows. Trans-acting factor that binds specifically to the consensus nucleotide sequence 5'-TNCGTACAA-3'. Binds specifically to the 5'-GTAC-3' core sequence. Involved in development and floral organogenesis. Required for ovule differentiation, pollen production, filament elongation, seed formation and siliques elongation. Also seems to play a role in the formation of trichomes on sepals. May positively modulate gibberellin (GA) signaling in flower. The protein is Squamosa promoter-binding-like protein 8 (SPL8) of Arabidopsis thaliana (Mouse-ear cress).